A 717-amino-acid chain; its full sequence is DNA polymerase iota (717 aa).

The interval 1–22 is disordered; that stretch reads MEPLHAGAAGSSRAVCSQGPPT. The 214-residue stretch at 30 to 243 folds into the UmuC domain; it reads IVHVDLDCFY…NHIKEIPGIG (214 aa). Residues Asp34 and Leu35 each contribute to the Mg(2+) site. Residues Tyr39 and Arg71 each contribute to the a 2'-deoxyribonucleoside 5'-triphosphate site. Mg(2+) is bound at residue Asp126. The Proton acceptor role is filled by Glu127. DNA-binding stretches follow at residues 300-307 and 343-360; these read QSFSEEDT and RLVI…ESRQ. Residues 500–517 carry the Ubiquitin-binding 1 (UBM1) motif; it reads VDQEVFKQLPADIQEEIL. Disordered regions lie at residues 549-589, 603-622, and 644-687; these read QMQA…SHPS, KDEQ…FSST, and HRTV…DIDP. The segment covering 575–589 has biased composition (low complexity); it reads PGTSGLSPGSTSHPS. Composition is skewed to polar residues over residues 607–622 and 652–662; these read TSQG…FSST and QTATASHQGLE. Residues 665 to 679 are compositionally biased toward basic and acidic residues; that stretch reads QGLESRELDSAEEKL. A Ubiquitin-binding 2 (UBM2) motif is present at residues 685 to 702; sequence IDPQVFYELPEEVQKELM.

The protein belongs to the DNA polymerase type-Y family. Interacts with POLH. Interacts with REV1. Interacts with ubiquitin. It depends on Mg(2+) as a cofactor. Requires Mn(2+) as cofactor. In terms of processing, monoubiquitinated. Protein monoubiquitination prevents POLI binding to ubiquitin via the ubiquitin-binding motif 1 and ubiquitin-binding motif 2. As to expression, detected in testis, and at very low levels in spleen, lung and brain. Detected in round spermatids, but not in prophase spermatocytes.

It localises to the nucleus. The enzyme catalyses DNA(n) + a 2'-deoxyribonucleoside 5'-triphosphate = DNA(n+1) + diphosphate. Functionally, error-prone DNA polymerase specifically involved in DNA repair. Plays an important role in translesion synthesis, where the normal high-fidelity DNA polymerases cannot proceed and DNA synthesis stalls. Favors Hoogsteen base-pairing in the active site. Inserts the correct base with high-fidelity opposite an adenosine template. Exhibits low fidelity and efficiency opposite a thymidine template, where it will preferentially insert guanosine. May play a role in hypermutation of immunoglobulin genes. Forms a Schiff base with 5'-deoxyribose phosphate at abasic sites, but may not have lyase activity. The polypeptide is DNA polymerase iota (Poli) (Mus musculus (Mouse)).